Consider the following 262-residue polypeptide: Putative cysteine-rich repeat secretory protein 24 (262 aa).

Positions 1-29 (MSLSSSVTKHLISASILAIVAMQLPSVHS) are cleaved as a signal peptide. Gnk2-homologous domains lie at 39-141 (YLHH…SIYT) and 147-259 (YKNN…LYPF).

This sequence belongs to the cysteine-rich repeat secretory protein family.

The protein localises to the secreted. In Arabidopsis thaliana (Mouse-ear cress), this protein is Putative cysteine-rich repeat secretory protein 24 (CRRSP24).